The chain runs to 85 residues: Ice-structuring protein 4 (85 aa).

The first 21 residues, 1-21 (MRITEANPDPDAKAVPAAAAP), serve as a signal peptide directing secretion.

This sequence belongs to the type-I AFP family.

It is found in the secreted. Functionally, contributes to protect fish blood from freezing at subzero sea water temperatures. Lowers the blood freezing point. Binds to nascent ice crystals and prevents further growth. This chain is Ice-structuring protein 4, found in Pseudopleuronectes americanus (Winter flounder).